Reading from the N-terminus, the 315-residue chain is Heterodimeric geranylgeranyl pyrophosphate synthase small subunit 1, chloroplastic (315 aa).

Residues aspartate 124 and glycine 130 each coordinate Mg(2+). Dimethylallyl diphosphate is bound by residues lysine 228, glutamine 265, and lysine 280.

Belongs to the FPP/GGPP synthase family. In terms of assembly, part of a heterodimeric geranyl(geranyl)diphosphate synthase. Mg(2+) is required as a cofactor. Mainly expressed in trichomes, and, to a lower extent, in roots, leaves, flowers and stems.

The protein resides in the plastid. It is found in the chloroplast thylakoid membrane. It localises to the chloroplast. Its function is as follows. Heterodimeric geranyl(geranyl)-diphosphate (GPP) synthase small subunit. The small subunit alone is inactive in vitro while the large subunit GGPPS1 catalyzes mainly the production of geranygeranyl-diphosphate in vitro. Upon association of the two subunits, the product profile changes and the production of gerany-diphosphate is strongly increased. In Cannabis sativa (Hemp), this protein is Heterodimeric geranylgeranyl pyrophosphate synthase small subunit 1, chloroplastic.